We begin with the raw amino-acid sequence, 102 residues long: Large ribosomal subunit protein bL21 (102 aa).

The protein belongs to the bacterial ribosomal protein bL21 family. As to quaternary structure, part of the 50S ribosomal subunit. Contacts protein L20.

Functionally, this protein binds to 23S rRNA in the presence of protein L20. The sequence is that of Large ribosomal subunit protein bL21 from Staphylococcus haemolyticus (strain JCSC1435).